The primary structure comprises 319 residues: Aliphatic sulfonates import ATP-binding protein SsuB (319 aa).

One can recognise an ABC transporter domain in the interval 63–282 (VTLSGVSKRF…ARASAAFAAL (220 aa)). Residue 95–102 (GRSGCGKS) coordinates ATP.

This sequence belongs to the ABC transporter superfamily. Aliphatic sulfonates importer (TC 3.A.1.17.2) family. In terms of assembly, the complex is composed of two ATP-binding proteins (SsuB), two transmembrane proteins (SsuC) and a solute-binding protein (SsuA).

The protein resides in the cell inner membrane. The catalysed reaction is ATP + H2O + aliphatic sulfonate-[sulfonate-binding protein]Side 1 = ADP + phosphate + aliphatic sulfonateSide 2 + [sulfonate-binding protein]Side 1.. Functionally, part of the ABC transporter complex SsuABC involved in aliphatic sulfonates import. Responsible for energy coupling to the transport system. The chain is Aliphatic sulfonates import ATP-binding protein SsuB from Burkholderia ambifaria (strain ATCC BAA-244 / DSM 16087 / CCUG 44356 / LMG 19182 / AMMD) (Burkholderia cepacia (strain AMMD)).